Here is a 300-residue protein sequence, read N- to C-terminus: MSTPFVTTLSPSLHGLLKDRLEEKGFIFTQPQHTIFQARSPSVSCTLYNSGKLVVQGKGAQEFIDFFLEPEILLTFTHNRMEKDLRPRLGVDESGKGDFFGPLCIAGVYARDAETLKNLYKTKIQDSKMLNDNQILALAKTIRACSTYDVMILYPEKYNELYAKFHNLNLLLAWAHATIIDQLAPRPSGEVFAISDQFASSESVLLQALRKKSTDISVIQKVRAEQDIVVAAASILAREAFIHTITKLEQRFSVKLPKGASAHVKSAGKTILNTQGKEILSLVCKTHFKTFYEICDSTDI.

The 215-residue stretch at 86–300 (RPRLGVDESG…FYEICDSTDI (215 aa)) folds into the RNase H type-2 domain. A divalent metal cation is bound by residues aspartate 92, glutamate 93, and aspartate 196.

Belongs to the RNase HII family. RnhC subfamily. Requires Mn(2+) as cofactor. The cofactor is Mg(2+).

It localises to the cytoplasm. It carries out the reaction Endonucleolytic cleavage to 5'-phosphomonoester.. Functionally, endonuclease that specifically degrades the RNA of RNA-DNA hybrids. This Chlamydia abortus (strain DSM 27085 / S26/3) (Chlamydophila abortus) protein is Ribonuclease HIII.